A 1407-amino-acid polypeptide reads, in one-letter code: DNA-directed RNA polymerase subunit beta' (1407 aa).

Zn(2+) contacts are provided by cysteine 70, cysteine 72, cysteine 85, and cysteine 88. Residues aspartate 458, aspartate 460, and aspartate 462 each coordinate Mg(2+). Zn(2+) is bound by residues cysteine 814, cysteine 888, cysteine 895, and cysteine 898.

It belongs to the RNA polymerase beta' chain family. As to quaternary structure, the RNAP catalytic core consists of 2 alpha, 1 beta, 1 beta' and 1 omega subunit. When a sigma factor is associated with the core the holoenzyme is formed, which can initiate transcription. The cofactor is Mg(2+). Zn(2+) is required as a cofactor.

The catalysed reaction is RNA(n) + a ribonucleoside 5'-triphosphate = RNA(n+1) + diphosphate. In terms of biological role, DNA-dependent RNA polymerase catalyzes the transcription of DNA into RNA using the four ribonucleoside triphosphates as substrates. In Leptothrix cholodnii (strain ATCC 51168 / LMG 8142 / SP-6) (Leptothrix discophora (strain SP-6)), this protein is DNA-directed RNA polymerase subunit beta'.